The following is a 229-amino-acid chain: Potassium/proton antiporter CemA (229 aa).

3 consecutive transmembrane segments (helical) span residues 6–26 (AFIP…ISLC), 107–127 (ILHF…SFWG), and 189–209 (ILSG…KYWI).

This sequence belongs to the CemA family.

It is found in the plastid. It localises to the chloroplast inner membrane. The catalysed reaction is K(+)(in) + H(+)(out) = K(+)(out) + H(+)(in). Functionally, contributes to K(+)/H(+) antiport activity by supporting proton efflux to control proton extrusion and homeostasis in chloroplasts in a light-dependent manner to modulate photosynthesis. Prevents excessive induction of non-photochemical quenching (NPQ) under continuous-light conditions. Indirectly promotes efficient inorganic carbon uptake into chloroplasts. This Nasturtium officinale (Watercress) protein is Potassium/proton antiporter CemA.